The primary structure comprises 268 residues: 4-hydroxy-tetrahydrodipicolinate reductase (268 aa).

NAD(+) contacts are provided by residues Gly10–Met15 and Asp36. Arg37 lines the NADP(+) pocket. Residues Gly99–Thr101 and Ser123–Met126 each bind NAD(+). The active-site Proton donor/acceptor is the His156. (S)-2,3,4,5-tetrahydrodipicolinate is bound at residue His157. The Proton donor role is filled by Lys160. Gly166–Thr167 is a binding site for (S)-2,3,4,5-tetrahydrodipicolinate.

This sequence belongs to the DapB family.

It localises to the cytoplasm. It catalyses the reaction (S)-2,3,4,5-tetrahydrodipicolinate + NAD(+) + H2O = (2S,4S)-4-hydroxy-2,3,4,5-tetrahydrodipicolinate + NADH + H(+). The catalysed reaction is (S)-2,3,4,5-tetrahydrodipicolinate + NADP(+) + H2O = (2S,4S)-4-hydroxy-2,3,4,5-tetrahydrodipicolinate + NADPH + H(+). It participates in amino-acid biosynthesis; L-lysine biosynthesis via DAP pathway; (S)-tetrahydrodipicolinate from L-aspartate: step 4/4. In terms of biological role, catalyzes the conversion of 4-hydroxy-tetrahydrodipicolinate (HTPA) to tetrahydrodipicolinate. The sequence is that of 4-hydroxy-tetrahydrodipicolinate reductase from Burkholderia pseudomallei (strain 1710b).